A 151-amino-acid chain; its full sequence is Desiccation-related protein PCC27-45 (151 aa).

Belongs to the LEA type 2 family.

The sequence is that of Desiccation-related protein PCC27-45 from Craterostigma plantagineum (Blue gem).